The sequence spans 297 residues: ER membrane protein complex subunit 2 (297 aa).

Ala-2 carries the post-translational modification N-acetylalanine. TPR repeat units lie at residues 87 to 120 (HRVK…DPTN), 155 to 188 (QEAW…NPHN), and 192 to 225 (CQQY…NNRN). An N6-acetyllysine modification is found at Lys-255.

Belongs to the EMC2 family. Component of the ER membrane protein complex (EMC). Interacts with WNK1 (via amphipathic alpha-helix region); promoting the ER membrane protein complex assembly by preventing EMC2 ubiquitination. Post-translationally, ubiquitinated when soluble in the cytoplasm, leading to its degradation by the proteasome. Interaction with EMC2 prevents its ubiquitination and degradation.

The protein resides in the endoplasmic reticulum membrane. In terms of biological role, part of the endoplasmic reticulum membrane protein complex (EMC) that enables the energy-independent insertion into endoplasmic reticulum membranes of newly synthesized membrane proteins. Preferentially accommodates proteins with transmembrane domains that are weakly hydrophobic or contain destabilizing features such as charged and aromatic residues. Involved in the cotranslational insertion of multi-pass membrane proteins in which stop-transfer membrane-anchor sequences become ER membrane spanning helices. It is also required for the post-translational insertion of tail-anchored/TA proteins in endoplasmic reticulum membranes. By mediating the proper cotranslational insertion of N-terminal transmembrane domains in an N-exo topology, with translocated N-terminus in the lumen of the ER, controls the topology of multi-pass membrane proteins like the G protein-coupled receptors. By regulating the insertion of various proteins in membranes, it is indirectly involved in many cellular processes. This is ER membrane protein complex subunit 2 from Pongo abelii (Sumatran orangutan).